Reading from the N-terminus, the 597-residue chain is Nuclear receptor subfamily 4 group A member 1 (597 aa).

The tract at residues 1–22 is disordered; sequence MPCIQAQYGTPATSPGPRDHLT. The segment at 170 to 465 is required for nuclear import; it reads RVWTEQLPKA…PGEGKLIFCS (296 aa). A DNA-binding region (nuclear receptor) is located at residues 263-338; the sequence is EGRCAVCGDN…VGMVKEVVRT (76 aa). 2 NR C4-type zinc fingers span residues 266 to 286 and 302 to 326; these read CAVCGDNASCQHYGVRTCEGC and CLANKDCPVDKRRRNRCQFCRFQKC. Residues 267–353 are required for binding NBRE-containing DNA; sequence AVCGDNASCQ…RRGRLPSKPK (87 aa). Residues 298–360 form a required for the interaction with RXRA region; it reads AKYICLANKD…KPKQPPDASP (63 aa). Ser-340 carries the phosphoserine; by PKA modification. The disordered stretch occupies residues 341-360; the sequence is LKGRRGRLPSKPKQPPDASP. At Ser-350 the chain carries Phosphoserine; by PKA, RPS6KA1 and RPS6KA3. The NR LBD domain occupies 359-594; sequence SPTNLLTSLI…PIVDKIFMDT (236 aa). Residues 520–543 form a binds lipopolysaccharide region; sequence PRRVEELQNRIASCLKEHMAAVAG. An AF-2 region spans residues 583–594; sequence PPPIVDKIFMDT.

This sequence belongs to the nuclear hormone receptor family. NR4 subfamily. In terms of assembly, binds the NGFI-B response element (NBRE) as a monomer. Binds the Nur response element (NurRE), consisting of two inverse NBRE-related octanucleotide repeats separated by 6 base-pairs, as a dimer. Interacts (via N-terminus) with NLRP3 (via LRR repeat domain); the interaction is direct, requires binding of NR4A1/Nur77 to NBRE-containing dsDNA and lipopolysaccharide, and leads to non-canonical NLRP3 inflammasome activation. Interacts with GADD45GIP1. Interacts with STK11. Interacts with IFI27. Heterodimer (via DNA-binding domain) with RXRA (via C-terminus); DNA-binding of the heterodimer is enhanced by 9-cis retinoic acid. Competes for the RXRA interaction with EP300 and thereby attenuates EP300 mediated acetylation of RXRA. Interacts with NCOA1. Interacts with NCOA2. Interacts with NCOA3. Zn(2+) serves as cofactor. In terms of processing, phosphorylated at Ser-350 by RPS6KA1 and RPS6KA3 in response to mitogenic or stress stimuli. Phosphorylation of Ser-350 results in decrease in NBRE binding while phosphorylation of Ser-340 has little effect on it. Post-translationally, acetylated by p300/CBP, acetylation increases stability. Deacetylated by HDAC1. As to expression, expressed in lung, brain and superior cervical ganglia. High levels are seen in the adrenal tissue.

The protein localises to the nucleus. It localises to the cytoplasm. Its subcellular location is the cytosol. It is found in the mitochondrion. In terms of biological role, orphan nuclear receptor. Binds the NGFI-B response element (NBRE) 5'-AAAGGTCA-3'. Binds 9-cis-retinoic acid outside of its ligand-binding (NR LBD) domain. Participates in energy homeostasis by sequestrating the kinase STK11 in the nucleus, thereby attenuating cytoplasmic AMPK activation. Regulates the inflammatory response in macrophages by regulating metabolic adaptations during inflammation, including repressing the transcription of genes involved in the citric acid cycle (TCA). Inhibits NF-kappa-B signaling by binding to low-affinity NF-kappa-B binding sites, such as at the IL2 promoter. May act concomitantly with NR4A2 in regulating the expression of delayed-early genes during liver regeneration. Plays a role in the vascular response to injury. Functionally, in the cytosol, upon its detection of both bacterial lipopolysaccharide (LPS) and NBRE-containing mitochondrial DNA released by GSDMD pores during pyroptosis, it promotes non-canonical NLRP3 inflammasome activation by stimulating association of NLRP3 and NEK7. The protein is Nuclear receptor subfamily 4 group A member 1 (Nr4a1) of Rattus norvegicus (Rat).